A 193-amino-acid polypeptide reads, in one-letter code: Glycerol-3-phosphate acyltransferase (193 aa).

Transmembrane regions (helical) follow at residues 2–22 (AFIISIIIAYLLGSLSFAVIV), 51–71 (QAAFYVLLGDAAKGLIAVLIA), 78–98 (GVSLAFVGLVAVLGHLFPVYF), 112–132 (VLLGLSFWIALFVIATWVIVV), and 154–174 (IIAGRTDYLFPVLIIAILLIW).

Belongs to the PlsY family. As to quaternary structure, probably interacts with PlsX.

It localises to the cell inner membrane. The catalysed reaction is an acyl phosphate + sn-glycerol 3-phosphate = a 1-acyl-sn-glycero-3-phosphate + phosphate. It functions in the pathway lipid metabolism; phospholipid metabolism. Functionally, catalyzes the transfer of an acyl group from acyl-phosphate (acyl-PO(4)) to glycerol-3-phosphate (G3P) to form lysophosphatidic acid (LPA). This enzyme utilizes acyl-phosphate as fatty acyl donor, but not acyl-CoA or acyl-ACP. This chain is Glycerol-3-phosphate acyltransferase, found in Coxiella burnetii (strain CbuG_Q212) (Coxiella burnetii (strain Q212)).